The following is a 264-amino-acid chain: Eukaryotic translation initiation factor 6 (264 aa).

It belongs to the eIF-6 family. In terms of assembly, monomer. Associates with the 60S ribosomal subunit.

The protein resides in the cytoplasm. It localises to the nucleus. Its subcellular location is the nucleolus. Its function is as follows. Binds to the 60S ribosomal subunit and prevents its association with the 40S ribosomal subunit to form the 80S initiation complex in the cytoplasm. May also be involved in ribosome biogenesis. This chain is Eukaryotic translation initiation factor 6, found in Toxoplasma gondii (strain ATCC 50861 / VEG).